We begin with the raw amino-acid sequence, 690 residues long: Iron-sulfur clusters transporter ATM1, mitochondrial (690 aa).

Residues 1-26 (MLLLPRCPVIGRIVRSKFRSGLIRNH) constitute a mitochondrion transit peptide. Residues 27 to 110 (SPVIFTVSKL…PKGNNKVRIR (84 aa)) are Mitochondrial matrix-facing. A helical membrane pass occupies residues 111-132 (VLIALGLLISAKILNVQVPFFF). The ABC transmembrane type-1 domain occupies 111 to 401 (VLIALGLLIS…LGSVYRDLKQ (291 aa)). The Mitochondrial intermembrane portion of the chain corresponds to 133 to 155 (KQTIDSMNIAWDDPTVALPAAIG). Residues 156 to 179 (LTILCYGVARFGSVLFGELRNAVF) form a helical membrane-spanning segment. Topologically, residues 180–228 (AKVAQNAIRTVSLQTFQHLMKLDLGWHLSRQTGGLTRAMDRGTKGISQV) are mitochondrial matrix. A helical membrane pass occupies residues 229 to 252 (LTAMVFHIIPISFEISVVCGILTY). A topological domain (mitochondrial intermembrane) is located at residue Gln253. A helical membrane pass occupies residues 254–274 (FGASFAAITFSTMLLYSIFTI). Residues 275–340 (KTTAWRTHFR…SQIKVSQSLA (66 aa)) are Mitochondrial matrix-facing. Glutathione contacts are provided by residues 280–284 (RTHFR) and 343–346 (NSGQ). The helical transmembrane segment at 341-359 (FLNSGQNLIFTTALTAMMY) threads the bilayer. Residues 360 to 374 (MGCTGVIGGNLTVGD) are Mitochondrial intermembrane-facing. The helical transmembrane segment at 375 to 396 (LVLINQLVFQLSVPLNFLGSVY) threads the bilayer. Gly393 contributes to the glutathione binding site. The Mitochondrial matrix segment spans residues 397-690 (RDLKQSLIDM…ENELKDQQEL (294 aa)). In terms of domain architecture, ABC transporter spans 436-672 (ITFENVTFGY…PGSLYRELWT (237 aa)). ATP-binding positions include Tyr445 and 469–480 (GSSGSGKSTILK).

This sequence belongs to the ABC transporter superfamily. ABCB family. Heavy Metal importer (TC 3.A.1.210) subfamily. As to quaternary structure, homodimer.

The protein localises to the mitochondrion inner membrane. Functionally, performs an essential function in the generation of cytoplasmic iron-sulfur proteins by mediating the ATP-dependent export of Fe/S cluster precursors synthesized by NFS1 and other mitochondrial proteins. Hydrolyzes ATP. Binds glutathione and may function by transporting a glutathione-conjugated iron-sulfur compound. The protein is Iron-sulfur clusters transporter ATM1, mitochondrial of Saccharomyces cerevisiae (strain ATCC 204508 / S288c) (Baker's yeast).